We begin with the raw amino-acid sequence, 459 residues long: DNA primase large subunit (459 aa).

Positions 291, 369, 386, and 428 each coordinate [4Fe-4S] cluster.

It belongs to the eukaryotic-type primase large subunit family. As to quaternary structure, heterodimer of a catalytic subunit spp1/pri1 and a regulatory subunit spp2/pri2, also known as the DNA primase complex. Component of the alpha DNA polymerase complex (also known as the alpha DNA polymerase-primase complex) consisting of four subunits: the catalytic subunit pol1, the accessory subunit spb70/pol12, and the primase complex subunits spp1/pri1 and spp2/pri2 respectively. Interacts with orc2; preferentially associates with the unphosphorylated orc2 in G1 pre-Start prior to orc2 being phosphorylated by cdc2, the interaction is mediated by spb70 and might enable the association of the whole alpha DNA polymerase complex to orc2/spb70 complex on chromatin. The cofactor is [4Fe-4S] cluster.

It is found in the nucleus. The protein localises to the chromosome. Functionally, regulatory subunit of the DNA primase complex and component of the DNA polymerase alpha complex (also known as the alpha DNA polymerase-primase complex - primosome/replisome) which play an essential role in the initiation of DNA synthesis. During the S phase of the cell cycle, the DNA polymerase alpha complex (composed of a catalytic subunit pol1, an accessory subunit spb70/pol12 and two primase subunits, the catalytic subunit spp1/pri1 and the regulatory subunit spp2/pri2) is recruited to DNA at the replicative forks. The primase subunit of the polymerase alpha complex initiates DNA synthesis by oligomerising short RNA primers on both leading and lagging strands. The polypeptide is DNA primase large subunit (Schizosaccharomyces pombe (strain 972 / ATCC 24843) (Fission yeast)).